Reading from the N-terminus, the 341-residue chain is Phenylalanine--tRNA ligase alpha subunit (341 aa).

Position 253 (glutamate 253) interacts with Mg(2+).

It belongs to the class-II aminoacyl-tRNA synthetase family. Phe-tRNA synthetase alpha subunit type 1 subfamily. In terms of assembly, tetramer of two alpha and two beta subunits. It depends on Mg(2+) as a cofactor.

The protein localises to the cytoplasm. The enzyme catalyses tRNA(Phe) + L-phenylalanine + ATP = L-phenylalanyl-tRNA(Phe) + AMP + diphosphate + H(+). The chain is Phenylalanine--tRNA ligase alpha subunit from Methylococcus capsulatus (strain ATCC 33009 / NCIMB 11132 / Bath).